Here is a 248-residue protein sequence, read N- to C-terminus: Pyridoxine 5'-phosphate synthase (248 aa).

N11 provides a ligand contact to 3-amino-2-oxopropyl phosphate. 13–14 provides a ligand contact to 1-deoxy-D-xylulose 5-phosphate; that stretch reads DH. R22 contributes to the 3-amino-2-oxopropyl phosphate binding site. Catalysis depends on H47, which acts as the Proton acceptor. 1-deoxy-D-xylulose 5-phosphate is bound by residues R49 and H54. Residue E74 is the Proton acceptor of the active site. T104 provides a ligand contact to 1-deoxy-D-xylulose 5-phosphate. H198 functions as the Proton donor in the catalytic mechanism. 3-amino-2-oxopropyl phosphate is bound by residues G199 and 220–221; that span reads GH.

The protein belongs to the PNP synthase family. Homooctamer; tetramer of dimers.

Its subcellular location is the cytoplasm. It catalyses the reaction 3-amino-2-oxopropyl phosphate + 1-deoxy-D-xylulose 5-phosphate = pyridoxine 5'-phosphate + phosphate + 2 H2O + H(+). It participates in cofactor biosynthesis; pyridoxine 5'-phosphate biosynthesis; pyridoxine 5'-phosphate from D-erythrose 4-phosphate: step 5/5. Functionally, catalyzes the complicated ring closure reaction between the two acyclic compounds 1-deoxy-D-xylulose-5-phosphate (DXP) and 3-amino-2-oxopropyl phosphate (1-amino-acetone-3-phosphate or AAP) to form pyridoxine 5'-phosphate (PNP) and inorganic phosphate. In Ruegeria pomeroyi (strain ATCC 700808 / DSM 15171 / DSS-3) (Silicibacter pomeroyi), this protein is Pyridoxine 5'-phosphate synthase.